The following is a 506-amino-acid chain: Probable cytochrome P450 309a1 (506 aa).

3 positions are modified to phosphothreonine: Thr-75, Thr-78, and Thr-81. Cys-452 serves as a coordination point for heme.

Belongs to the cytochrome P450 family. Requires heme as cofactor.

The protein localises to the endoplasmic reticulum membrane. It is found in the microsome membrane. Functionally, may be involved in the metabolism of insect hormones and in the breakdown of synthetic insecticides. This is Probable cytochrome P450 309a1 (Cyp309a1) from Drosophila melanogaster (Fruit fly).